A 339-amino-acid chain; its full sequence is Glycerol-3-phosphate dehydrogenase [NAD(P)+] (339 aa).

The NADPH site is built by Ser-15, Tyr-16, His-36, and Lys-110. The sn-glycerol 3-phosphate site is built by Lys-110, Gly-139, and Thr-141. Position 143 (Ala-143) interacts with NADPH. Positions 195, 248, 258, 259, and 260 each coordinate sn-glycerol 3-phosphate. The active-site Proton acceptor is Lys-195. Arg-259 contributes to the NADPH binding site. Residues Val-283 and Glu-285 each coordinate NADPH.

This sequence belongs to the NAD-dependent glycerol-3-phosphate dehydrogenase family.

It localises to the cytoplasm. It catalyses the reaction sn-glycerol 3-phosphate + NAD(+) = dihydroxyacetone phosphate + NADH + H(+). It carries out the reaction sn-glycerol 3-phosphate + NADP(+) = dihydroxyacetone phosphate + NADPH + H(+). Its pathway is membrane lipid metabolism; glycerophospholipid metabolism. In terms of biological role, catalyzes the reduction of the glycolytic intermediate dihydroxyacetone phosphate (DHAP) to sn-glycerol 3-phosphate (G3P), the key precursor for phospholipid synthesis. This Escherichia coli O17:K52:H18 (strain UMN026 / ExPEC) protein is Glycerol-3-phosphate dehydrogenase [NAD(P)+].